Consider the following 90-residue polypeptide: Albumin (90 aa).

Position 5 is a phosphoserine (Ser-5). Ca(2+) is bound by residues Glu-6 and Asp-13. One can recognise an Albumin domain in the interval 25–90 (LLRHLVDEPQ…LVASTQAALA (66 aa)). The residue at position 61 (Ser-61) is a Phosphoserine. Phosphothreonine occurs at positions 62 and 64. Position 80 is an N6-methyllysine (Lys-80).

This sequence belongs to the ALB/AFP/VDB family. In terms of assembly, interacts with FCGRT; this interaction regulates ALB homeostasis. Interacts with TASOR. In plasma, occurs in a covalently-linked complex with chromophore-bound alpha-1-microglobulin; this interaction does not prevent fatty acid binding to ALB. Plasma.

The protein resides in the secreted. Binds water, Ca(2+), Na(+), K(+), fatty acids, hormones, bilirubin and drugs. Its main function is the regulation of the colloidal osmotic pressure of blood. Major zinc transporter in plasma, typically binds about 80% of all plasma zinc. Major calcium and magnesium transporter in plasma, binds approximately 45% of circulating calcium and magnesium in plasma. Potentially has more than two calcium-binding sites and might additionally bind calcium in a non-specific manner. The shared binding site between zinc and calcium suggests a crosstalk between zinc and calcium transport in the blood. The rank order of affinity is zinc &gt; calcium &gt; magnesium. Binds to the bacterial siderophore enterobactin and inhibits enterobactin-mediated iron uptake of E.coli from ferric transferrin, and may thereby limit the utilization of iron and growth of enteric bacteria such as E.coli. Does not prevent iron uptake by the bacterial siderophore aerobactin. The polypeptide is Albumin (Capra hircus (Goat)).